The following is a 744-amino-acid chain: Cell surface receptor daf-4 (744 aa).

The first 31 residues, 1–31, serve as a signal peptide directing secretion; sequence MNQKGTVRLKALVLICLPLFLIATPVPVAVT. The Extracellular segment spans residues 48–253; sequence WANTLVSKVA…IALLILAYVG (206 aa). Residues Asn-60, Asn-134, and Asn-165 are each glycosylated (N-linked (GlcNAc...) asparagine). A helical membrane pass occupies residues 254-274; it reads WKFQQNKKEEIKKQQKIKFDM. Topologically, residues 275 to 744 are cytoplasmic; it reads EKTDALEAGN…PSGTFGTFTT (470 aa). The Protein kinase domain occupies 306-603; that stretch reads ITDFQLISKG…FARVWNHIMS (298 aa). Residues 312 to 320 and Lys-338 contribute to the ATP site; that span reads ISKGRFGKV. Asp-440 serves as the catalytic Proton acceptor. 2 disordered regions span residues 605-686 and 724-744; these read PDSS…PEPE and AGAD…TFTT. Over residues 620–639 the composition is skewed to basic and acidic residues; it reads RGVDDVEQSEKPEGIEEMQH. Low complexity predominate over residues 731 to 744; the sequence is STPTPSGTFGTFTT.

Belongs to the protein kinase superfamily. TKL Ser/Thr protein kinase family. TGFB receptor subfamily. As to quaternary structure, may interact with daf-1 to regulate dauer larva development. Interacts with sma-10. Pharynx, intestine, hypodermis and body wall muscles in L1 through to adult stages. Also expressed in head neurons, ventral cord and tail neurons. Subset of head neurons show coexpression with daf-1 when dauer/nondauer decision is made.

It is found in the cell membrane. It catalyses the reaction L-threonyl-[receptor-protein] + ATP = O-phospho-L-threonyl-[receptor-protein] + ADP + H(+). The catalysed reaction is L-seryl-[receptor-protein] + ATP = O-phospho-L-seryl-[receptor-protein] + ADP + H(+). Involved in a TGF-beta pathway. May be a receptor for TGF-beta-like ligand daf-7. Controls the decision of whether or not larvae enter a developmentally arrested state, known as dauer, in response to environmental conditions. Regulates body size and male tail patterning. Involved in regulating entry into quiescence triggered by satiety. Involved in sensitivity to CO2 levels. In Caenorhabditis elegans, this protein is Cell surface receptor daf-4.